A 245-amino-acid polypeptide reads, in one-letter code: Probable 2-phosphosulfolactate phosphatase (245 aa).

Belongs to the ComB family. Mg(2+) is required as a cofactor.

It catalyses the reaction (2R)-O-phospho-3-sulfolactate + H2O = (2R)-3-sulfolactate + phosphate. This is Probable 2-phosphosulfolactate phosphatase from Synechococcus sp. (strain RCC307).